The chain runs to 450 residues: 3-phosphoshikimate 1-carboxyvinyltransferase (450 aa).

Positions 1–26 (MSAHGDPIPMTAHPSGPLSGTAQVPG) are disordered. Lysine 28, serine 29, and arginine 33 together coordinate 3-phosphoshikimate. Lysine 28 is a binding site for phosphoenolpyruvate. Phosphoenolpyruvate is bound by residues glycine 101 and arginine 129. Residues serine 174, glutamine 176, aspartate 327, and lysine 354 each contribute to the 3-phosphoshikimate site. Glutamine 176 provides a ligand contact to phosphoenolpyruvate. Aspartate 327 functions as the Proton acceptor in the catalytic mechanism. Phosphoenolpyruvate contacts are provided by arginine 358 and arginine 403.

This sequence belongs to the EPSP synthase family. In terms of assembly, monomer.

The protein resides in the cytoplasm. It carries out the reaction 3-phosphoshikimate + phosphoenolpyruvate = 5-O-(1-carboxyvinyl)-3-phosphoshikimate + phosphate. The protein operates within metabolic intermediate biosynthesis; chorismate biosynthesis; chorismate from D-erythrose 4-phosphate and phosphoenolpyruvate: step 6/7. In terms of biological role, catalyzes the transfer of the enolpyruvyl moiety of phosphoenolpyruvate (PEP) to the 5-hydroxyl of shikimate-3-phosphate (S3P) to produce enolpyruvyl shikimate-3-phosphate and inorganic phosphate. This is 3-phosphoshikimate 1-carboxyvinyltransferase from Dinoroseobacter shibae (strain DSM 16493 / NCIMB 14021 / DFL 12).